The chain runs to 155 residues: UPF0260 protein R01011 (155 aa).

The protein belongs to the UPF0260 family.

In Rhizobium meliloti (strain 1021) (Ensifer meliloti), this protein is UPF0260 protein R01011.